We begin with the raw amino-acid sequence, 837 residues long: Striatin-interacting protein 1 (837 aa).

Met-1 is subject to N-acetylmethionine. 2 disordered regions span residues 1–66 and 333–423; these read MEPA…SESP and AASP…KGLP. Residues 18–35 show a composition bias toward pro residues; sequence PQPPPPPPPATAQPPPGA. The span at 47 to 60 shows a compositional bias: basic and acidic residues; sequence KAREFNRNQRKDSE. 3 positions are modified to phosphoserine: Ser-59, Ser-335, and Ser-339. Residues 356-377 are compositionally biased toward basic and acidic residues; that stretch reads KALIKQDNLDAFNERDPYKADD. The span at 378 to 391 shows a compositional bias: acidic residues; sequence SREEEEENDDDNSL. Ser-788 is modified (phosphoserine). A required for STRIPAK core complex formation region spans residues 796–837; sequence DNCLQSVLGQRVDLPEDFQMNYDLWLEREVFSKPISWEELLQ.

It belongs to the STRIP family. In terms of assembly, part of the core of STRIPAK complexes composed of PP2A catalytic and scaffolding subunits, the striatins (PP2A regulatory subunits), the striatin-associated proteins MOB4, STRIP1 and STRIP2, PDCD10 and members of the STE20 kinases, such as STK24 and STK26. The STRIPAK complex can be extended by adapter proteins such as SLMAP:SIKE1, CTTNBP2 or CTTNBP2NL. Interacts with CDC42BPB. Interacts with CTTNBP2NL.

It is found in the cytoplasm. Plays a role in the regulation of cell morphology and cytoskeletal organization. Required in the cortical actin filament dynamics and cell shape. Part of the striatin-interacting phosphatase and kinase (STRIPAK) complexes. STRIPAK complexes have critical roles in protein (de)phosphorylation and are regulators of multiple signaling pathways including Hippo, MAPK, nuclear receptor and cytoskeleton remodeling. Different types of STRIPAK complexes are involved in a variety of biological processes such as cell growth, differentiation, apoptosis, metabolism and immune regulation. The polypeptide is Striatin-interacting protein 1 (STRIP1) (Macaca fascicularis (Crab-eating macaque)).